Consider the following 346-residue polypeptide: Phosphate acyltransferase (346 aa).

Belongs to the PlsX family. In terms of assembly, homodimer. Probably interacts with PlsY.

It is found in the cytoplasm. It catalyses the reaction a fatty acyl-[ACP] + phosphate = an acyl phosphate + holo-[ACP]. Its pathway is lipid metabolism; phospholipid metabolism. In terms of biological role, catalyzes the reversible formation of acyl-phosphate (acyl-PO(4)) from acyl-[acyl-carrier-protein] (acyl-ACP). This enzyme utilizes acyl-ACP as fatty acyl donor, but not acyl-CoA. The protein is Phosphate acyltransferase of Brucella abortus (strain S19).